A 949-amino-acid polypeptide reads, in one-letter code: MAM domain-containing glycosylphosphatidylinositol anchor protein 2 (949 aa).

An N-terminal signal peptide occupies residues 1 to 25 (MDLVYGLVWLLTVLLEGISGQGVYA). 2 consecutive Ig-like domains span residues 27-127 (PTVR…IRVD) and 134-232 (PVVT…KMVS). Disulfide bonds link C62/C110 and C159/C216. Residues N92, N213, and N237 are each glycosylated (N-linked (GlcNAc...) asparagine). 4 Ig-like domains span residues 242–328 (PSIK…NIIV), 340–436 (PDPY…VNIS), 442–533 (PNLT…ALVQ), and 540–627 (PAVE…FLVT). Intrachain disulfides connect C264/C310 and C359/C417. N-linked (GlcNAc...) asparagine glycosylation is found at N434, N443, N504, N610, and N703. 2 disulfide bridges follow: C465/C515 and C561/C611. The 101-residue stretch at 638-738 (DTYNPVWQNR…TIRVIKYTGE (101 aa)) folds into the Fibronectin type-III domain. The region spanning 739–914 (FHCGFEDGNI…VSIAEGECAK (176 aa)) is the MAM domain. A lipid anchor (GPI-anchor amidated aspartate) is attached at D924. Positions 925-949 (GAVGILVHIWLFPVIILISILSPRR) are cleaved as a propeptide — removed in mature form.

Interacts (through the Ig-like domains) with NLGN2. In terms of tissue distribution, expressed predominantly in neuronal tissue. Expressed in brain.

It localises to the cell membrane. Its function is as follows. May be involved in cell-cell interactions. The polypeptide is MAM domain-containing glycosylphosphatidylinositol anchor protein 2 (Mdga2) (Rattus norvegicus (Rat)).